Reading from the N-terminus, the 471-residue chain is MAKIKTRFAPSPTGYLHIGGARTALYSWLYARRHGGHFVLRIEDTDRERSTQESVNVILEGMSWLGLDYDEGPFYQTERFDRYRELTQRLLDEGLAYRCYCSKERLDALRQEQMANKQKPRYDGRCRDLTEPPEGAGEPVIRFRNPLDGEVVVEDRVRGRVVFRNSELDDLIIARADGTPTYNFTVVVDDMDMGITHVVRGDDHLNNTPRQVNLYRALGVEPPVFAHVPMILGEDGKRLSKRHGAVSVLQYRDQGYLPEAVLNYLVRLGWSHGDQEVFTLDEMVSLFDLEDINHSASTFNPQKLLWLNQQHIMRAEPAHVARYLAHHLGERDIDPADGPPLEAVVAAQQERAKTLVEMAENSLFFYRDPADYEPKAARKNLKPETEAALVRVRDLLSELEDWRPEAIHECVLKAAEVLELKLGKVAQPVRVAVSGGPVSPPIDQTLALLGKEATLRRIQAAIDWIDRQAAG.

The 'HIGH' region motif lies at 10 to 20; that stretch reads PSPTGYLHIGG. The Zn(2+) site is built by Cys99, Cys101, Cys126, and Asp128. The 'KMSKS' region motif lies at 238 to 242; it reads RLSKR. Lys241 is a binding site for ATP.

It belongs to the class-I aminoacyl-tRNA synthetase family. Glutamate--tRNA ligase type 1 subfamily. As to quaternary structure, monomer. The cofactor is Zn(2+).

It is found in the cytoplasm. The enzyme catalyses tRNA(Glu) + L-glutamate + ATP = L-glutamyl-tRNA(Glu) + AMP + diphosphate. Functionally, catalyzes the attachment of glutamate to tRNA(Glu) in a two-step reaction: glutamate is first activated by ATP to form Glu-AMP and then transferred to the acceptor end of tRNA(Glu). In Alkalilimnicola ehrlichii (strain ATCC BAA-1101 / DSM 17681 / MLHE-1), this protein is Glutamate--tRNA ligase 1.